The following is an 807-amino-acid chain: Leucine--tRNA ligase (807 aa).

The 'HIGH' region signature appears at 38 to 49 (PYPSGSGLHVGH). The short motif at 579-583 (KMSKS) is the 'KMSKS' region element. Position 582 (Lys-582) interacts with ATP.

The protein belongs to the class-I aminoacyl-tRNA synthetase family.

It is found in the cytoplasm. It catalyses the reaction tRNA(Leu) + L-leucine + ATP = L-leucyl-tRNA(Leu) + AMP + diphosphate. The protein is Leucine--tRNA ligase of Mycoplasmopsis pulmonis (strain UAB CTIP) (Mycoplasma pulmonis).